The following is an 88-amino-acid chain: Small ribosomal subunit protein bS20 (88 aa).

It belongs to the bacterial ribosomal protein bS20 family.

Functionally, binds directly to 16S ribosomal RNA. The protein is Small ribosomal subunit protein bS20 of Desulforudis audaxviator (strain MP104C).